Consider the following 148-residue polypeptide: Nucleoside diphosphate kinase 1 (148 aa).

Lys9, Phe57, Arg85, Thr91, Arg102, and Asn112 together coordinate ATP. The active-site Pros-phosphohistidine intermediate is the His115.

It belongs to the NDK family. Mg(2+) is required as a cofactor.

It catalyses the reaction a 2'-deoxyribonucleoside 5'-diphosphate + ATP = a 2'-deoxyribonucleoside 5'-triphosphate + ADP. The enzyme catalyses a ribonucleoside 5'-diphosphate + ATP = a ribonucleoside 5'-triphosphate + ADP. In terms of biological role, major role in the synthesis of nucleoside triphosphates other than ATP. The ATP gamma phosphate is transferred to the NDP beta phosphate via a ping-pong mechanism, using a phosphorylated active-site intermediate. The sequence is that of Nucleoside diphosphate kinase 1 (NDKP1) from Mesembryanthemum crystallinum (Common ice plant).